The following is a 62-amino-acid chain: Large ribosomal subunit protein bL28 (62 aa).

A disordered region spans residues 1–27 (MARECYITGRKARSGNKRSHAMNKSKR). Over residues 10–27 (RKARSGNKRSHAMNKSKR) the composition is skewed to basic residues.

This sequence belongs to the bacterial ribosomal protein bL28 family.

The polypeptide is Large ribosomal subunit protein bL28 (Shouchella clausii (strain KSM-K16) (Alkalihalobacillus clausii)).